The following is a 306-amino-acid chain: tRNA pseudouridine synthase B (306 aa).

D47 acts as the Nucleophile in catalysis.

It belongs to the pseudouridine synthase TruB family. Type 1 subfamily.

The enzyme catalyses uridine(55) in tRNA = pseudouridine(55) in tRNA. Functionally, responsible for synthesis of pseudouridine from uracil-55 in the psi GC loop of transfer RNAs. The sequence is that of tRNA pseudouridine synthase B from Neisseria gonorrhoeae (strain ATCC 700825 / FA 1090).